A 521-amino-acid polypeptide reads, in one-letter code: Bacillolysin (521 aa).

Positions 1 to 27 (MGLGKKLSVAVAASFMSLTISLPGVQA) are cleaved as a signal peptide. Residues 28-221 (AENPQLKENL…ILKKQNKVEH (194 aa)) constitute a propeptide, activation peptide. Residues Gln283 and Asp360 each coordinate Ca(2+). A Zn(2+)-binding site is contributed by His364. Glu365 is an active-site residue. Positions 368 and 388 each coordinate Zn(2+). 5 residues coordinate Ca(2+): Asp399, Asp402, Asp404, Glu407, and Val411. Catalysis depends on His449, which acts as the Proton donor.

The protein belongs to the peptidase M4 family. The cofactor is Ca(2+). Zn(2+) serves as cofactor.

The protein resides in the secreted. It carries out the reaction Similar, but not identical, to that of thermolysin.. In terms of biological role, extracellular zinc metalloprotease. The protein is Bacillolysin (npr) of Bacillus amyloliquefaciens (Bacillus velezensis).